The sequence spans 244 residues: Cobalt transport protein CbiM (244 aa).

Residues 1-28 (MKLLKNKKVTFVALLAILAVLSTQSVSA) form the signal peptide. A run of 6 helical transmembrane segments spans residues 36-56 (LPLFWCIFWFAVFLPFFVVGL), 71-91 (TMLALSGAFIFILSSLKIPSV), 108-128 (FGPSVISVLGTICLLFQALLL), 135-155 (TLGANAFSMAVVGPFVGYFVY), 166-186 (PVSIFICAVIADLATYATTSI), and 208-228 (GVFLTTQIPIAIVEGLLTVVL).

This sequence belongs to the CbiM family. Forms an energy-coupling factor (ECF) transporter complex composed of an ATP-binding protein (A component, CbiO), a transmembrane protein (T component, CbiQ) and 2 possible substrate-capture proteins (S components, CbiM and CbiN) of unknown stoichimetry.

It is found in the cell membrane. It functions in the pathway cofactor biosynthesis; adenosylcobalamin biosynthesis. In terms of biological role, part of the energy-coupling factor (ECF) transporter complex CbiMNOQ involved in cobalt import. This Streptococcus sanguinis (strain SK36) protein is Cobalt transport protein CbiM.